We begin with the raw amino-acid sequence, 207 residues long: Ribosomal RNA large subunit methyltransferase E (207 aa).

The S-adenosyl-L-methionine site is built by G60, W62, D80, D96, and D121. Residue K161 is the Proton acceptor of the active site.

Belongs to the class I-like SAM-binding methyltransferase superfamily. RNA methyltransferase RlmE family.

It is found in the cytoplasm. The enzyme catalyses uridine(2552) in 23S rRNA + S-adenosyl-L-methionine = 2'-O-methyluridine(2552) in 23S rRNA + S-adenosyl-L-homocysteine + H(+). Its function is as follows. Specifically methylates the uridine in position 2552 of 23S rRNA at the 2'-O position of the ribose in the fully assembled 50S ribosomal subunit. This chain is Ribosomal RNA large subunit methyltransferase E, found in Pseudomonas paraeruginosa (strain DSM 24068 / PA7) (Pseudomonas aeruginosa (strain PA7)).